Here is an 809-residue protein sequence, read N- to C-terminus: Sucrose synthase 4 (809 aa).

A GT-B glycosyltransferase region spans residues 275-753 (MIFNVVVVSP…GLQRIYEKYT (479 aa)).

This sequence belongs to the glycosyltransferase 1 family. Plant sucrose synthase subfamily. Predominantly expressed in the leaf tissues and in caryopses.

The enzyme catalyses an NDP-alpha-D-glucose + D-fructose = a ribonucleoside 5'-diphosphate + sucrose + H(+). Functionally, sucrose-cleaving enzyme that provides UDP-glucose and fructose for various metabolic pathways. The polypeptide is Sucrose synthase 4 (SUS4) (Oryza sativa subsp. japonica (Rice)).